A 289-amino-acid polypeptide reads, in one-letter code: Ribosomal protein L11 methyltransferase (289 aa).

Residues Thr-142, Gly-163, Asp-185, and Asn-226 each coordinate S-adenosyl-L-methionine.

It belongs to the methyltransferase superfamily. PrmA family.

Its subcellular location is the cytoplasm. It catalyses the reaction L-lysyl-[protein] + 3 S-adenosyl-L-methionine = N(6),N(6),N(6)-trimethyl-L-lysyl-[protein] + 3 S-adenosyl-L-homocysteine + 3 H(+). Functionally, methylates ribosomal protein L11. This is Ribosomal protein L11 methyltransferase from Legionella pneumophila (strain Paris).